The primary structure comprises 400 residues: MGRAKKVVLAYSGGVDTSVCIPYLMHEWGVEEVITLAADLGQGDELGPIQEKALRCGAVESLVIDGKEEFVKEYAFRSIQANALYENRYPLSTALARPLIAKMLVEAAEKYGADAVAHGCTGKGNDQVRFDISIMALNPNLKVLAPAREWKMSREETIAYGERYGVESPVKKSSPYSIDRNILGRSIEAGPLEDPMTEPTEEIYLMTKAIADTPDEPEYVDIGFEKGIPVSLNGVMLDPVTLVERLNEIAGNHGVGRLDMVENRVVGIKSREIYEAPALLVLIDAHRDLESLTQTADVTHYKNTVEEIYSQLIYRGLWYSPLKEALDAFIVKTQERVTGMVRVKFFKGNANVAGRKSDYSIYDAELATYGMEDQFDHKAAEGFIYIWGLPTKVWAQKMRG.

ATP contacts are provided by residues 10 to 18 (AYSGGVDTS) and A38. Y89 is a binding site for L-citrulline. G119 contacts ATP. Residues T121, N125, and D126 each coordinate L-aspartate. N125 is an L-citrulline binding site. L-citrulline contacts are provided by R129, S177, S186, E262, and Y274.

The protein belongs to the argininosuccinate synthase family. Type 1 subfamily. Homotetramer.

The protein resides in the cytoplasm. The catalysed reaction is L-citrulline + L-aspartate + ATP = 2-(N(omega)-L-arginino)succinate + AMP + diphosphate + H(+). The protein operates within amino-acid biosynthesis; L-arginine biosynthesis; L-arginine from L-ornithine and carbamoyl phosphate: step 2/3. Activity decreases to 53.9% and 18.4% in the presence of 1 mM and 5 mM arginine, respectively. Activity also decreases to 80.1%, 78.1% and 92.1% in the presence of 5 mM ornithine, lysine and succinate, respectively. Activity does not decrease in the presence of glutamate, glutamine or asparagine. In terms of biological role, catalyzes the condensation of citrulline and aspartate into argininosuccinate, the immediate precursor of arginine. SyArgG is the rate-limiting step in arginine biosynthesis in Synechocystis PCC 6803. This Synechocystis sp. (strain ATCC 27184 / PCC 6803 / Kazusa) protein is Argininosuccinate synthase.